Here is a 283-residue protein sequence, read N- to C-terminus: Shikimate dehydrogenase (NADP(+)) (283 aa).

Shikimate contacts are provided by residues 16–18 (SLS) and T63. K67 serves as the catalytic Proton acceptor. D79 lines the NADP(+) pocket. Residues N88 and D103 each coordinate shikimate. NADP(+) contacts are provided by residues 128–132 (GAGGA), A223, and G243.

Belongs to the shikimate dehydrogenase family. As to quaternary structure, homodimer.

It catalyses the reaction shikimate + NADP(+) = 3-dehydroshikimate + NADPH + H(+). It functions in the pathway metabolic intermediate biosynthesis; chorismate biosynthesis; chorismate from D-erythrose 4-phosphate and phosphoenolpyruvate: step 4/7. In terms of biological role, involved in the biosynthesis of the chorismate, which leads to the biosynthesis of aromatic amino acids. Catalyzes the reversible NADPH linked reduction of 3-dehydroshikimate (DHSA) to yield shikimate (SA). The sequence is that of Shikimate dehydrogenase (NADP(+)) from Xanthomonas campestris pv. campestris (strain B100).